A 194-amino-acid chain; its full sequence is CASP-like protein 2C1 (194 aa).

At 1-18 (MSSYMEAAAAARAAEAKT) the chain is on the cytoplasmic side. The helical transmembrane segment at 19-39 (EGLLRGACALLAAAAALLVGL) threads the bilayer. The Extracellular portion of the chain corresponds to 40-59 (NTQTETVLFIRKKATVKDVQ). Residues 60–80 (ALWVLAMAAAAAAGYHLLQLL) form a helical membrane-spanning segment. Over 81-109 (RCFYLSRFADGKPCRHRRAIAWLCFLLDK) the chain is Cytoplasmic. The chain crosses the membrane as a helical span at residues 110–130 (GCAYITFATTVAAAQACVVAL). At 131–151 (YGTHALQWTKLCNIYTRFCEQ) the chain is on the extracellular side. A helical transmembrane segment spans residues 152-172 (VAGSLVCAMLAAVGTALLSVV). At 173–194 (SARNLFRLYPSMLSPPPSSFVG) the chain is on the cytoplasmic side.

It belongs to the Casparian strip membrane proteins (CASP) family. Homodimer and heterodimers.

It is found in the cell membrane. This Oryza sativa subsp. japonica (Rice) protein is CASP-like protein 2C1.